Reading from the N-terminus, the 313-residue chain is D-alanine--D-alanine ligase (313 aa).

An ATP-grasp domain is found at 108-308; the sequence is KLVWQQTGVP…YSELVVKVLS (201 aa). ATP is bound at residue 138-193; the sequence is VAKLGLPLFVKPASEGSSVAVLKVKTADALPAALAEAATHDKIVIVEKSIEGGGEY. The Mg(2+) site is built by Asp-262, Glu-275, and Asn-277.

This sequence belongs to the D-alanine--D-alanine ligase family. Mg(2+) serves as cofactor. Requires Mn(2+) as cofactor.

Its subcellular location is the cytoplasm. It catalyses the reaction 2 D-alanine + ATP = D-alanyl-D-alanine + ADP + phosphate + H(+). It participates in cell wall biogenesis; peptidoglycan biosynthesis. Functionally, cell wall formation. The chain is D-alanine--D-alanine ligase from Burkholderia orbicola (strain MC0-3).